A 253-amino-acid polypeptide reads, in one-letter code: Tryptophan synthase alpha chain (253 aa).

Residues E47 and D58 each act as proton acceptor in the active site.

It belongs to the TrpA family. As to quaternary structure, tetramer of two alpha and two beta chains.

It carries out the reaction (1S,2R)-1-C-(indol-3-yl)glycerol 3-phosphate + L-serine = D-glyceraldehyde 3-phosphate + L-tryptophan + H2O. It functions in the pathway amino-acid biosynthesis; L-tryptophan biosynthesis; L-tryptophan from chorismate: step 5/5. The alpha subunit is responsible for the aldol cleavage of indoleglycerol phosphate to indole and glyceraldehyde 3-phosphate. In Desulforapulum autotrophicum (strain ATCC 43914 / DSM 3382 / VKM B-1955 / HRM2) (Desulfobacterium autotrophicum), this protein is Tryptophan synthase alpha chain.